We begin with the raw amino-acid sequence, 519 residues long: Aspartokinase (519 aa).

Ser-326 is subject to Phosphoserine. Thr-328 carries the phosphothreonine modification. The ACT domain occupies 436-518 (LVGKHMRNTT…MLVEKPWLYS (83 aa)).

It belongs to the aspartokinase family.

The catalysed reaction is L-aspartate + ATP = 4-phospho-L-aspartate + ADP. Its pathway is amino-acid biosynthesis; L-methionine biosynthesis via de novo pathway; L-homoserine from L-aspartate: step 1/3. It participates in amino-acid biosynthesis; L-threonine biosynthesis; L-threonine from L-aspartate: step 1/5. Functionally, phosphorylates aspartate, the first step in the biosynthesis of amino acids that derive from aspartate (the aspartate family of amino acids), including methioinine and threonine, the latter of which is a precursor to isoleucine. The protein is Aspartokinase of Schizosaccharomyces pombe (strain 972 / ATCC 24843) (Fission yeast).